The sequence spans 501 residues: Lysine--tRNA ligase (501 aa).

Positions 410 and 417 each coordinate Mg(2+).

It belongs to the class-II aminoacyl-tRNA synthetase family. As to quaternary structure, homodimer. Mg(2+) serves as cofactor.

Its subcellular location is the cytoplasm. The catalysed reaction is tRNA(Lys) + L-lysine + ATP = L-lysyl-tRNA(Lys) + AMP + diphosphate. The sequence is that of Lysine--tRNA ligase from Shewanella pealeana (strain ATCC 700345 / ANG-SQ1).